The primary structure comprises 127 residues: Glycine cleavage system H protein (127 aa).

Residues 24–105 (TLTIGITDLA…AYDAWLFKIK (82 aa)) form the Lipoyl-binding domain. At Lys65 the chain carries N6-lipoyllysine.

It belongs to the GcvH family. In terms of assembly, the glycine cleavage system is composed of four proteins: P, T, L and H. (R)-lipoate is required as a cofactor.

In terms of biological role, the glycine cleavage system catalyzes the degradation of glycine. The H protein shuttles the methylamine group of glycine from the P protein to the T protein. The polypeptide is Glycine cleavage system H protein (Ralstonia nicotianae (strain ATCC BAA-1114 / GMI1000) (Ralstonia solanacearum)).